A 157-amino-acid chain; its full sequence is MKLHELSDNPGATKKRMRIGRGPGSGKGKMGGRGIKGQKSRSGVAINGYEGGQMPLYQRLPKRGFNKPNRKAFAVVNLGLIQKFVEAGKLDGAAAITEDALVASGLVRRKLDGIRVLAKGDFNAKLNIEVTGASKSAVEAVEKAGGSLKVTNAAAAE.

The segment at 1 to 40 is disordered; that stretch reads MKLHELSDNPGATKKRMRIGRGPGSGKGKMGGRGIKGQKS. A compositionally biased stretch (gly residues) spans 21–35; it reads RGPGSGKGKMGGRGI.

Belongs to the universal ribosomal protein uL15 family. In terms of assembly, part of the 50S ribosomal subunit.

Its function is as follows. Binds to the 23S rRNA. In Ruegeria pomeroyi (strain ATCC 700808 / DSM 15171 / DSS-3) (Silicibacter pomeroyi), this protein is Large ribosomal subunit protein uL15.